The sequence spans 259 residues: Protein POLYCHOME (259 aa).

Residues 236 to 259 (KMKSTPSAKRAEREKRVRTLMSMR) form a disordered region.

In terms of assembly, interacts with APC/C activators such as APC5, FZR2, FZR3, CDC20.1 and CDC20.5. In terms of tissue distribution, expressed mainly in actively dividing cells (e.g. central cylinder of the root tip, young leaves and vascular tissues).

The protein localises to the nucleus. Its function is as follows. Negative regulator of the anaphase-promoting complex/cyclosome (APC/C) ubiquitin ligase required for proper mitotic progression and cell fate determination; inhibits premature cell differentiation. Prevents DNA endoreplication by promoting the maintenance of the mitotic state by preferentially inhibiting APC/C(FZR) and triggering cyclins accumulation (e.g. CYCB1-1, CYCB1-2 and CYCA2-3) in a temporal manner. Required for megagametophyte and endosperm development. Counteracts the activity of CCS52A1 thus inhibiting the turnover of CYCA2-3. Confers immunity to bacterial pathogens (e.g. Pseudomonas syringae pv. tomato DC3000), which is associated with increased expression of disease resistance (R) genes. In Arabidopsis thaliana (Mouse-ear cress), this protein is Protein POLYCHOME (PYM).